The sequence spans 182 residues: Dual-action ribosomal maturation protein DarP (182 aa).

Residues 1–20 are disordered; the sequence is MNKQPEEWQDPQSLQQQDDE.

It belongs to the DarP family.

The protein resides in the cytoplasm. In terms of biological role, member of a network of 50S ribosomal subunit biogenesis factors which assembles along the 30S-50S interface, preventing incorrect 23S rRNA structures from forming. Promotes peptidyl transferase center (PTC) maturation. This chain is Dual-action ribosomal maturation protein DarP, found in Sodalis glossinidius (strain morsitans).